The sequence spans 596 residues: Elongation factor 4 (596 aa).

One can recognise a tr-type G domain in the interval 2-184; that stretch reads KQIRNFSIIA…VIVAKIPPPE (183 aa). GTP contacts are provided by residues 14-19 and 131-134; these read DHGKST and NKID.

Belongs to the TRAFAC class translation factor GTPase superfamily. Classic translation factor GTPase family. LepA subfamily.

The protein localises to the cell inner membrane. It carries out the reaction GTP + H2O = GDP + phosphate + H(+). Its function is as follows. Required for accurate and efficient protein synthesis under certain stress conditions. May act as a fidelity factor of the translation reaction, by catalyzing a one-codon backward translocation of tRNAs on improperly translocated ribosomes. Back-translocation proceeds from a post-translocation (POST) complex to a pre-translocation (PRE) complex, thus giving elongation factor G a second chance to translocate the tRNAs correctly. Binds to ribosomes in a GTP-dependent manner. The chain is Elongation factor 4 from Shewanella baltica (strain OS155 / ATCC BAA-1091).